The following is a 426-amino-acid chain: Fc receptor-like B (426 aa).

The first 17 residues, 1–17 (MWPLTALLLLVPSSGQA), serve as a signal peptide directing secretion. Ig-like C2-type domains lie at 23–101 (PILS…LSVS) and 103–189 (DWLI…VAVT). 2 cysteine pairs are disulfide-bonded: Cys44-Cys85 and Cys124-Cys168. An N-linked (GlcNAc...) asparagine glycan is attached at Asn152. Positions 400–426 (ELRGTPETPTSHFAVSPGTPETTPVES) are disordered. Positions 406 to 426 (ETPTSHFAVSPGTPETTPVES) are enriched in polar residues.

Expressed at low levels. Expressed in B-lymphocytes. Detected in tonsil, lung, kidney, spleen and placenta. Expressed by a small subset of germinal center B-cells in tonsils and by melanocytes (at protein level).

The protein resides in the cytoplasm. The protein localises to the endoplasmic reticulum. This is Fc receptor-like B (FCRLB) from Homo sapiens (Human).